A 421-amino-acid polypeptide reads, in one-letter code: Testin (421 aa).

Residues 92–199 (MILTNPVAAK…GDVKLPRDMN (108 aa)) enclose the PET domain. 2 disordered regions span residues 133 to 164 (EKQPVAGSEGAQYRKKQLAKQLPAHDQDPSKC) and 193 to 213 (KLPRDMNTQGPNRMYIPGGDR). Positions 155-164 (PAHDQDPSKC) are enriched in basic and acidic residues. LIM zinc-binding domains lie at 234–297 (YSCY…CDSE), 299–359 (PRCA…NHAV), and 362–421 (QGCH…KMMS).

This sequence belongs to the prickle / espinas / testin family. In terms of assembly, interacts via LIM domain 1 with ZYX. Interacts (via LIM domain 3) with ENAH and VASP. Interacts with ALKBH4, talin, actin, alpha-actinin, GRIP1 and PXN. Interacts (via LIM domain 2) with ACTL7A (via N-terminus). Heterodimer with ACTL7A; the heterodimer interacts with ENAH to form a heterotrimer.

It localises to the cytoplasm. The protein resides in the cell junction. The protein localises to the focal adhesion. Functionally, scaffold protein that may play a role in cell adhesion, cell spreading and in the reorganization of the actin cytoskeleton. Plays a role in the regulation of cell proliferation. May act as a tumor suppressor. This Muntiacus muntjak (Barking deer) protein is Testin (TES).